The chain runs to 93 residues: Acylphosphatase (93 aa).

Cys5 and Cys49 are joined by a disulfide. The Acylphosphatase-like domain maps to 5-93 (CIIAWVYGRV…ETLTGFSIRY (89 aa)). Residues Arg20 and Asn38 contribute to the active site.

It belongs to the acylphosphatase family.

It catalyses the reaction an acyl phosphate + H2O = a carboxylate + phosphate + H(+). The chain is Acylphosphatase from Salmonella typhi.